We begin with the raw amino-acid sequence, 312 residues long: Glycerol 2-dehydrogenase (NADP(+)) (312 aa).

Tyrosine 56 serves as the catalytic Proton donor. Histidine 112 contacts substrate. 220-274 (SPLGSTDAPLLKEPVILEIAKKNNVQPGHVVISWHVQRGYVVLPKSVNPDRIKTN) is an NADP(+) binding site. Serine 306 is modified (phosphoserine).

Belongs to the aldo/keto reductase family.

Its subcellular location is the cytoplasm. It carries out the reaction glycerol + NADP(+) = dihydroxyacetone + NADPH + H(+). In terms of biological role, glycerol dehydrogenase involved in glycerol catabolism under microaerobic conditions. Has mRNA binding activity. The sequence is that of Glycerol 2-dehydrogenase (NADP(+)) (GCY1) from Saccharomyces cerevisiae (strain ATCC 204508 / S288c) (Baker's yeast).